A 473-amino-acid chain; its full sequence is Flavonol 3-O-glucosyltransferase UGT89B1 (473 aa).

The active-site Proton acceptor is His25. His25 contributes to the an anthocyanidin binding site. The Charge relay role is filled by Asp127. UDP-alpha-D-glucose is bound by residues Ala348, Gln350, His365, Trp368, Asn369, Ser370, and Glu373. Ala388 serves as a coordination point for an anthocyanidin. UDP-alpha-D-glucose is bound by residues Asp389 and Gln390.

Belongs to the UDP-glycosyltransferase family.

The enzyme catalyses a flavonol + UDP-alpha-D-glucose = a flavonol 3-O-beta-D-glucoside + UDP + H(+). It catalyses the reaction a 7-O-hydroxy-flavonol + UDP-alpha-D-glucose = a flavonol 7-O-beta-D-glucoside + UDP + H(+). Its function is as follows. Possesses quercetin 3-O-glucosyltransferase, 7-O-glucosyltransferase and 4'-O-glucosyltransferase activities in vitro. Also active in vitro on benzoates and benzoate derivatives. The protein is Flavonol 3-O-glucosyltransferase UGT89B1 of Arabidopsis thaliana (Mouse-ear cress).